Consider the following 366-residue polypeptide: Phosphoserine aminotransferase (366 aa).

Arginine 42 contacts L-glutamate. Residues 76 to 77, tryptophan 101, threonine 156, aspartate 178, and glutamine 201 each bind pyridoxal 5'-phosphate; that span reads AT. An N6-(pyridoxal phosphate)lysine modification is found at lysine 202. Residue 243 to 244 coordinates pyridoxal 5'-phosphate; that stretch reads NT.

Belongs to the class-V pyridoxal-phosphate-dependent aminotransferase family. SerC subfamily. In terms of assembly, homodimer. It depends on pyridoxal 5'-phosphate as a cofactor.

It localises to the cytoplasm. It catalyses the reaction O-phospho-L-serine + 2-oxoglutarate = 3-phosphooxypyruvate + L-glutamate. It carries out the reaction 4-(phosphooxy)-L-threonine + 2-oxoglutarate = (R)-3-hydroxy-2-oxo-4-phosphooxybutanoate + L-glutamate. Its pathway is amino-acid biosynthesis; L-serine biosynthesis; L-serine from 3-phospho-D-glycerate: step 2/3. It participates in cofactor biosynthesis; pyridoxine 5'-phosphate biosynthesis; pyridoxine 5'-phosphate from D-erythrose 4-phosphate: step 3/5. Catalyzes the reversible conversion of 3-phosphohydroxypyruvate to phosphoserine and of 3-hydroxy-2-oxo-4-phosphonooxybutanoate to phosphohydroxythreonine. The chain is Phosphoserine aminotransferase from Aromatoleum aromaticum (strain DSM 19018 / LMG 30748 / EbN1) (Azoarcus sp. (strain EbN1)).